Reading from the N-terminus, the 111-residue chain is Rubredoxin (111 aa).

One can recognise a Rubredoxin-like domain in the interval 11–62; sequence LDRFECRSCGYVYEPEKGDSKHDIAPETPFAELPINWRCPVCTAKKAAFSNI. Fe cation is bound by residues C16, C19, C49, and C52.

This sequence belongs to the rubredoxin family. The cofactor is Fe(3+).

Its function is as follows. Rubredoxin is a small nonheme, iron protein lacking acid-labile sulfide. Its single Fe, chelated to 4 Cys, functions as an electron acceptor and may also stabilize the conformation of the molecule. Could be involved in hydrogenase-linked redox processes. This chain is Rubredoxin (rub), found in Trichormus variabilis (strain ATCC 29413 / PCC 7937) (Anabaena variabilis).